We begin with the raw amino-acid sequence, 911 residues long: DNA polymerase I (911 aa).

The 5'-3' exonuclease domain occupies 186–280; sequence VTPAQYPDLA…DTLRLQPWDR (95 aa). Residues 320–497 form the 3'-5' exonuclease domain; that stretch reads RGGLLESGTV…LAAALDAELD (178 aa).

This sequence belongs to the DNA polymerase type-A family. In terms of assembly, single-chain monomer with multiple functions.

The enzyme catalyses DNA(n) + a 2'-deoxyribonucleoside 5'-triphosphate = DNA(n+1) + diphosphate. Functionally, in addition to polymerase activity, this DNA polymerase exhibits 3'-5' and 5'-3' exonuclease activity. This is DNA polymerase I (polA) from Mycobacterium leprae (strain TN).